We begin with the raw amino-acid sequence, 262 residues long: MKTWLFFTFLFSCSSFYASCRYAEVRSIHEVAGDILYDEENFWLILDLDDTLLQGGEALSHSIWKSKAIQGLQKQGTPEQEAWEAVVPFWIEIQEMGTVQPIESAIFLLIEKIQKQGKTTFVYTERPKTAKDLTLKQLHMLNVSLEDTAPQPQAPLPKNLLYTSGILFSGDYHKGPGLDLFLEICTPLPAKIIYIDNQKENVLRIGDLCQKYGIAYFGITYKAQELHPPIYFDNIAQVQYNYSKKLLSNEAAALLLRHQMHE.

The signal sequence occupies residues 1-17; sequence MKTWLFFTFLFSCSSFY.

It localises to the cell outer membrane. The polypeptide is Putative outer membrane protein CPn_1034/CP_0818/CPj1034/CpB1074 (Chlamydia pneumoniae (Chlamydophila pneumoniae)).